We begin with the raw amino-acid sequence, 231 residues long: Transcriptional regulatory protein KdpE (231 aa).

In terms of domain architecture, Response regulatory spans 4 to 117 (KILIIEDDHA…ELRARIRVIE (114 aa)). D53 carries the post-translational modification 4-aspartylphosphate. Residues 127-227 (NIVFTNGLLS…HPRIGYQMLQ (101 aa)) constitute a DNA-binding region (ompR/PhoB-type).

In terms of processing, phosphorylated by KdpD. Phosphorylation is required for transcriptional activity.

Its function is as follows. Member of the two-component regulatory system KdpD/KdpE that regulates the transcription of a series of virulence factors through sensing external K(+) concentrations. Also regulates capsular polysaccharide synthesis. Upon phosphorylation by KpdD, functions as a transcriptional regulator by direct binding to promoter regions of target genes including spa, hla, aur and geh. Represses the transcription of kdpFABC operon. The polypeptide is Transcriptional regulatory protein KdpE (Staphylococcus aureus (strain NCTC 8325 / PS 47)).